The chain runs to 369 residues: 4-hydroxy-3-methylbut-2-en-1-yl diphosphate synthase (flavodoxin) (369 aa).

Cys270, Cys273, Cys305, and Glu312 together coordinate [4Fe-4S] cluster.

The protein belongs to the IspG family. [4Fe-4S] cluster is required as a cofactor.

It carries out the reaction (2E)-4-hydroxy-3-methylbut-2-enyl diphosphate + oxidized [flavodoxin] + H2O + 2 H(+) = 2-C-methyl-D-erythritol 2,4-cyclic diphosphate + reduced [flavodoxin]. It functions in the pathway isoprenoid biosynthesis; isopentenyl diphosphate biosynthesis via DXP pathway; isopentenyl diphosphate from 1-deoxy-D-xylulose 5-phosphate: step 5/6. Converts 2C-methyl-D-erythritol 2,4-cyclodiphosphate (ME-2,4cPP) into 1-hydroxy-2-methyl-2-(E)-butenyl 4-diphosphate. This Pseudomonas fluorescens (strain SBW25) protein is 4-hydroxy-3-methylbut-2-en-1-yl diphosphate synthase (flavodoxin).